The sequence spans 246 residues: DNA repair protein RecO (246 aa).

It belongs to the RecO family.

Its function is as follows. Involved in DNA repair and RecF pathway recombination. The chain is DNA repair protein RecO from Methylobacterium nodulans (strain LMG 21967 / CNCM I-2342 / ORS 2060).